A 151-amino-acid chain; its full sequence is Large ribosomal subunit protein bL9 (151 aa).

Belongs to the bacterial ribosomal protein bL9 family.

Binds to the 23S rRNA. The sequence is that of Large ribosomal subunit protein bL9 from Rhodococcus jostii (strain RHA1).